The chain runs to 93 residues: AYKVTLKTPDGDITFDVEPGERLIDIGSEKADLPLSCQAGACSTCLGKIVSGTVDQSEGSFLDDEQIEQGYVLTCIAIPESDVVIETHKEDEL.

Residues 2 to 91 (YKVTLKTPDG…DVVIETHKED (90 aa)) enclose the 2Fe-2S ferredoxin-type domain. Residues Cys37, Cys42, Cys45, and Cys75 each coordinate [2Fe-2S] cluster.

It belongs to the 2Fe2S plant-type ferredoxin family. Requires [2Fe-2S] cluster as cofactor.

It is found in the plastid. The protein localises to the chloroplast. Its function is as follows. Ferredoxins are iron-sulfur proteins that transfer electrons in a wide variety of metabolic reactions. This chain is Ferredoxin-2, found in Equisetum arvense (Field horsetail).